Here is a 63-residue protein sequence, read N- to C-terminus: Megourin-3 (63 aa).

In terms of assembly, monomer. Post-translationally, contains four disulfide bonds.

It is found in the secreted. Functionally, has antimicrobial activity against Gram-positive bacteria and fungi. The chain is Megourin-3 from Megoura viciae (Vetch aphid).